The chain runs to 214 residues: Probable nicotinate-nucleotide adenylyltransferase (214 aa).

The protein belongs to the NadD family.

The enzyme catalyses nicotinate beta-D-ribonucleotide + ATP + H(+) = deamido-NAD(+) + diphosphate. It participates in cofactor biosynthesis; NAD(+) biosynthesis; deamido-NAD(+) from nicotinate D-ribonucleotide: step 1/1. In terms of biological role, catalyzes the reversible adenylation of nicotinate mononucleotide (NaMN) to nicotinic acid adenine dinucleotide (NaAD). In Pseudomonas aeruginosa (strain UCBPP-PA14), this protein is Probable nicotinate-nucleotide adenylyltransferase.